The sequence spans 490 residues: Sulfate adenylyltransferase (490 aa).

Residues 1–165 (MTKALLKDLN…LQAVTPIRHF (165 aa)) are N-terminal. Residues 166 to 390 (DFVEYRYSPA…LRQSYPPKYS (225 aa)) are catalytic. Q193 is a sulfate binding site. Residues 193–196 (QTRN) and 287–290 (GRDH) each bind ATP. Residues T194, R195, and N196 contribute to the active site. A sulfate-binding site is contributed by R195. A291 provides a ligand contact to sulfate. M329 contributes to the ATP binding site. T356 carries the phosphothreonine modification. The segment at 391 to 490 (QGFVLAVPAT…LSQLSDEGYL (100 aa)) is required for oligomerization; adenylyl-sulfate kinase-like.

This sequence belongs to the sulfate adenylyltransferase family. In terms of assembly, homohexamer. Dimer of trimers.

It is found in the cytoplasm. It carries out the reaction sulfate + ATP + H(+) = adenosine 5'-phosphosulfate + diphosphate. It functions in the pathway sulfur metabolism; hydrogen sulfide biosynthesis; sulfite from sulfate: step 1/3. In terms of biological role, catalyzes the first intracellular reaction of sulfate assimilation, forming adenosine-5'-phosphosulfate (APS) from inorganic sulfate and ATP. Plays an important role in sulfate activation as a component of the biosynthesis pathway of sulfur-containing amino acids. The sequence is that of Sulfate adenylyltransferase (sua1) from Schizosaccharomyces pombe (strain 972 / ATCC 24843) (Fission yeast).